The chain runs to 1011 residues: Protein translocase subunit SecA, chloroplastic (1011 aa).

Polar residues predominate over residues 1–17 (MATSSLCSSFTSQTCNP). A disordered region spans residues 1-22 (MATSSLCSSFTSQTCNPHSRPH). The N-terminal 59 residues, 1-59 (MATSSLCSSFTSQTCNPHSRPHRKTLTLPGSVFLCRQFHLNSPSVSKTRRIRTRQSGPV), are a transit peptide targeting the chloroplast. ATP is bound at residue 164–171 (MRTGEGKT). The tract at residues 976 to 1011 (QDKMENQKSGKRNARPPTDTNPDPVGTVEPSTSASS) is disordered.

It belongs to the SecA family.

Its subcellular location is the plastid. It localises to the chloroplast stroma. The protein localises to the chloroplast thylakoid membrane. It catalyses the reaction ATP + H2O + chloroplast-proteinSide 1 = ADP + phosphate + chloroplast-proteinSide 2.. Its function is as follows. Has a central role in coupling the hydrolysis of ATP to the transfer of proteins across the thylakoid membrane. Facilitates the transport of precursor proteins from the chloroplast stroma to thylakoid lumen. This Pisum sativum (Garden pea) protein is Protein translocase subunit SecA, chloroplastic.